Reading from the N-terminus, the 406-residue chain is Putative nickel insertion protein (406 aa).

It belongs to the LarC family.

The sequence is that of Putative nickel insertion protein from Thermomicrobium roseum (strain ATCC 27502 / DSM 5159 / P-2).